Consider the following 817-residue polypeptide: Protein EFR3 homolog B (817 aa).

A phosphoserine mark is found at Ser-212, Ser-214, and Ser-216.

The protein belongs to the EFR3 family. In terms of assembly, component of a phosphatidylinositol 4-kinase (PI4K) complex, composed of PI4KA, EFR3 (EFR3A or EFR3B), TTC7 (TTC7A or TTC7B) and HYCC (HYCC1 or HYCC2). Post-translationally, palmitoylated at its N-terminus, anchoring the protein to the plasma membrane.

The protein localises to the cell membrane. It localises to the cytoplasm. Its subcellular location is the cytosol. Functionally, component of a complex required to localize phosphatidylinositol 4-kinase (PI4K) to the plasma membrane. The complex acts as a regulator of phosphatidylinositol 4-phosphate (PtdIns(4)P) synthesis. In the complex, EFR3B probably acts as the membrane-anchoring component. Also involved in responsiveness to G-protein-coupled receptors; it is however unclear whether this role is direct or indirect. The sequence is that of Protein EFR3 homolog B from Homo sapiens (Human).